We begin with the raw amino-acid sequence, 511 residues long: Maturase K (511 aa).

It belongs to the intron maturase 2 family. MatK subfamily.

It localises to the plastid. It is found in the chloroplast. Functionally, usually encoded in the trnK tRNA gene intron. Probably assists in splicing its own and other chloroplast group II introns. The chain is Maturase K from Campsis radicans (Trumpet creeper).